We begin with the raw amino-acid sequence, 60 residues long: Large ribosomal subunit protein bL32 (60 aa).

Belongs to the bacterial ribosomal protein bL32 family.

The sequence is that of Large ribosomal subunit protein bL32 from Clostridium acetobutylicum (strain ATCC 824 / DSM 792 / JCM 1419 / IAM 19013 / LMG 5710 / NBRC 13948 / NRRL B-527 / VKM B-1787 / 2291 / W).